The primary structure comprises 492 residues: Transmembrane protease serine 2 (492 aa).

At 1–84 the chain is on the cytoplasmic side; the sequence is MALNSGSPPA…TVCTSKTKKA (84 aa). Residues 85 to 105 form a helical; Signal-anchor for type II membrane protein membrane-spanning segment; that stretch reads LCITLTLGTFLVGAALAAGLL. The Extracellular portion of the chain corresponds to 106-492; it reads WKFMGSKCSN…WIYRQMRADG (387 aa). 9 disulfides stabilise this stretch: Cys113–Cys126, Cys120–Cys139, Cys133–Cys148, Cys172–Cys231, Cys185–Cys241, Cys244–Cys365, Cys281–Cys297, Cys410–Cys426, and Cys437–Cys465. In terms of domain architecture, LDL-receptor class A spans 118–148; that stretch reads IECDSSGTCINPSNWCDGVSHCPGGEDENRC. Ca(2+) contacts are provided by Asn131, Asp134, Val136, Asp144, and Glu145. The SRCR domain occupies 149–242; sequence VRLYGPNFIL…SKAVVSLRCI (94 aa). 2 N-linked (GlcNAc...) asparagine glycosylation sites follow: Asn213 and Asn249. The 237-residue stretch at 256–492 folds into the Peptidase S1 domain; it reads IVGGESALPG…WIYRQMRADG (237 aa). Catalysis depends on charge relay system residues His296 and Asp345. The interval 340–470 is HKU1-CoV S protein-binding; the sequence is KTKNNDIALM…WGSGCAKAYR (131 aa). Residue Ser441 is the Charge relay system of the active site.

The protein belongs to the peptidase S1 family. The catalytically active form interacts with ACE2. Proteolytically processed; by an autocatalytic mechanism. Autocleavage induces active conformation. As to expression, expressed in several tissues that comprise large populations of epithelial cells with the highest level of transcripts measured in the prostate gland. Expressed in type II pneumocytes in the lung (at protein level). Expressed strongly in small intestine. Also expressed in colon, stomach and salivary gland. Coexpressed with ACE2 within lung type II pneumocytes, ileal absorptive enterocytes, intestinal epithelial cells, cornea, gallbladder and nasal goblet secretory cells.

Its subcellular location is the cell membrane. It is found in the secreted. It carries out the reaction The enzyme cleaves angiotensin-converting enzyme 2 (EC 3.4.17.23) and cleaves influenzea A and B virus and coronavirus spike glycoproteins at arginine residues.. Plasma membrane-anchored serine protease that cleaves at arginine residues. Participates in proteolytic cascades of relevance for the normal physiologic function of the prostate. Androgen-induced TMPRSS2 activates several substrates that include pro-hepatocyte growth factor/HGF, the protease activated receptor-2/F2RL1 or matriptase/ST14 leading to extracellular matrix disruption and metastasis of prostate cancer cells. In addition, activates trigeminal neurons and contribute to both spontaneous pain and mechanical allodynia. In terms of biological role, (Microbial infection) Facilitates human coronaviruses SARS-CoV and SARS-CoV-2 infections via two independent mechanisms, proteolytic cleavage of ACE2 receptor which promotes viral uptake, and cleavage of coronavirus spike glycoproteins which activates the glycoprotein for host cell entry. The cleavage of SARS-COV2 spike glycoprotein occurs between the S2 and S2' site. Upon SARS-CoV-2 infection, increases syncytia formation by accelerating the fusion process. Proteolytically cleaves and activates the spike glycoproteins of human coronavirus 229E (HCoV-229E) and human coronavirus EMC (HCoV-EMC) and the fusion glycoproteins F0 of Sendai virus (SeV), human metapneumovirus (HMPV), human parainfluenza 1, 2, 3, 4a and 4b viruses (HPIV). Essential for spread and pathogenesis of influenza A virus (strains H1N1, H3N2 and H7N9); involved in proteolytic cleavage and activation of hemagglutinin (HA) protein which is essential for viral infectivity. Functionally, (Microbial infection) Receptor for human coronavirus HKU1-CoV, acts synergistically with disialoside glycans to facilitate the entry of the virus. After binding to cell-surface disialoside glycans, the viral S protein interacts with the inactive form of TMPRSS2 and inhibits its protease activity. This chain is Transmembrane protease serine 2, found in Homo sapiens (Human).